A 98-amino-acid polypeptide reads, in one-letter code: Integration host factor subunit beta (98 aa).

Belongs to the bacterial histone-like protein family. In terms of assembly, heterodimer of an alpha and a beta chain.

Its function is as follows. This protein is one of the two subunits of integration host factor, a specific DNA-binding protein that functions in genetic recombination as well as in transcriptional and translational control. This chain is Integration host factor subunit beta, found in Pseudomonas putida (strain GB-1).